A 106-amino-acid polypeptide reads, in one-letter code: Large ribosomal subunit protein uL24 (106 aa).

It belongs to the universal ribosomal protein uL24 family. In terms of assembly, part of the 50S ribosomal subunit.

In terms of biological role, one of two assembly initiator proteins, it binds directly to the 5'-end of the 23S rRNA, where it nucleates assembly of the 50S subunit. Functionally, one of the proteins that surrounds the polypeptide exit tunnel on the outside of the subunit. This is Large ribosomal subunit protein uL24 from Acidithiobacillus ferrooxidans (strain ATCC 53993 / BNL-5-31) (Leptospirillum ferrooxidans (ATCC 53993)).